Consider the following 131-residue polypeptide: T3C protein (131 aa).

This is T3C protein from Ovis aries (Sheep).